The chain runs to 131 residues: Large ribosomal subunit protein bL17 (131 aa).

The protein belongs to the bacterial ribosomal protein bL17 family. As to quaternary structure, part of the 50S ribosomal subunit. Contacts protein L32.

This Janthinobacterium sp. (strain Marseille) (Minibacterium massiliensis) protein is Large ribosomal subunit protein bL17.